The chain runs to 224 residues: UPF0758 protein lin1584 (224 aa).

In terms of domain architecture, MPN spans 102–224 (VIRCPEDAVK…YISLKEKGYF (123 aa)). Zn(2+) contacts are provided by His173, His175, and Asp186. Positions 173–186 (HNHPSGDPAPSSED) match the JAMM motif motif.

It belongs to the UPF0758 family.

The sequence is that of UPF0758 protein lin1584 from Listeria innocua serovar 6a (strain ATCC BAA-680 / CLIP 11262).